Reading from the N-terminus, the 581-residue chain is Proline--tRNA ligase (581 aa).

It belongs to the class-II aminoacyl-tRNA synthetase family. ProS type 1 subfamily. As to quaternary structure, homodimer.

Its subcellular location is the cytoplasm. The enzyme catalyses tRNA(Pro) + L-proline + ATP = L-prolyl-tRNA(Pro) + AMP + diphosphate. Catalyzes the attachment of proline to tRNA(Pro) in a two-step reaction: proline is first activated by ATP to form Pro-AMP and then transferred to the acceptor end of tRNA(Pro). As ProRS can inadvertently accommodate and process non-cognate amino acids such as alanine and cysteine, to avoid such errors it has two additional distinct editing activities against alanine. One activity is designated as 'pretransfer' editing and involves the tRNA(Pro)-independent hydrolysis of activated Ala-AMP. The other activity is designated 'posttransfer' editing and involves deacylation of mischarged Ala-tRNA(Pro). The misacylated Cys-tRNA(Pro) is not edited by ProRS. The sequence is that of Proline--tRNA ligase from Variovorax paradoxus (strain S110).